The sequence spans 275 residues: Tryptophan synthase alpha chain (275 aa).

Active-site proton acceptor residues include glutamate 51 and glutamate 62.

It belongs to the TrpA family. As to quaternary structure, tetramer of two alpha and two beta chains.

The enzyme catalyses (1S,2R)-1-C-(indol-3-yl)glycerol 3-phosphate + L-serine = D-glyceraldehyde 3-phosphate + L-tryptophan + H2O. The protein operates within amino-acid biosynthesis; L-tryptophan biosynthesis; L-tryptophan from chorismate: step 5/5. The alpha subunit is responsible for the aldol cleavage of indoleglycerol phosphate to indole and glyceraldehyde 3-phosphate. In Caulobacter sp. (strain K31), this protein is Tryptophan synthase alpha chain.